The primary structure comprises 219 residues: Interleukin-12 subunit alpha (219 aa).

The first 22 residues, 1–22, serve as a signal peptide directing secretion; the sequence is MCPARSLLLVATLVLLDYLSLA. N-linked (GlcNAc...) asparagine glycans are attached at residues asparagine 24, asparagine 93, and asparagine 107. 3 cysteine pairs are disulfide-bonded: cysteine 37-cysteine 110, cysteine 64-cysteine 196, and cysteine 85-cysteine 123.

The protein belongs to the IL-6 superfamily. As to quaternary structure, heterodimer with IL12B; disulfide-linked. This heterodimer is known as interleukin IL-12. Heterodimer with EBI3/IL27B; not disulfide-linked. This heterodimer is known as interleukin IL-35. Interacts with NBR1; this interaction promotes IL-12 secretion.

Its subcellular location is the secreted. Functionally, heterodimerizes with IL12B to form the IL-12 cytokine or with EBI3/IL27B to form the IL-35 cytokine. IL-12 is primarily produced by professional antigen-presenting cells (APCs) such as B-cells and dendritic cells (DCs) as well as macrophages and granulocytes and regulates T-cell and natural killer-cell responses, induces the production of interferon-gamma (IFN-gamma), favors the differentiation of T-helper 1 (Th1) cells and is an important link between innate resistance and adaptive immunity. Mechanistically, exerts its biological effects through a receptor composed of IL12R1 and IL12R2 subunits. Binding to the receptor results in the rapid tyrosine phosphorylation of a number of cellular substrates including the JAK family kinases TYK2 and JAK2. In turn, recruited STAT4 gets phosphorylated and translocates to the nucleus where it regulates cytokine/growth factor responsive genes. As part of IL-35, plays essential roles in maintaining the immune homeostasis of the liver microenvironment and also functions as an immune-suppressive cytokine. Mediates biological events through unconventional receptors composed of IL12RB2 and gp130/IL6ST heterodimers or homodimers. Signaling requires the transcription factors STAT1 and STAT4, which form a unique heterodimer that binds to distinct DNA sites. The polypeptide is Interleukin-12 subunit alpha (IL12A) (Cercocebus atys (Sooty mangabey)).